The following is a 412-amino-acid chain: Maltoporin (412 aa).

The first 22 residues, 1 to 22, serve as a signal peptide directing secretion; it reads MKKVSVIAAAVAATLAAGSAFA.

This sequence belongs to the porin LamB (TC 1.B.3) family. As to quaternary structure, homotrimer formed of three 18-stranded antiparallel beta-barrels, containing three independent channels.

It is found in the cell outer membrane. It catalyses the reaction beta-maltose(in) = beta-maltose(out). Involved in the transport of maltose and maltodextrins. This chain is Maltoporin, found in Vibrio cholerae serotype O1 (strain ATCC 39315 / El Tor Inaba N16961).